A 598-amino-acid chain; its full sequence is Ceramide transfer protein (598 aa).

A compositionally biased stretch (polar residues) spans 1–11; sequence MSDNQSWNSSG. The interval 1 to 24 is disordered; that stretch reads MSDNQSWNSSGSEEDPETESGPPV. Residues 23 to 117 form the PH domain; the sequence is PVERCGVLSK…WIDAIEQHKT (95 aa). Residue Ser126 is modified to Phosphoserine. Position 132 is a phosphoserine; by PKD (Ser132). Ser135 is modified (phosphoserine). A disordered region spans residues 202 to 221; sequence DDEDDFPTTRSDGDFLHNTN. A coiled-coil region spans residues 268 to 301; it reads KREESWQKRHDKEMEKRRRLEEAYKNAMAELKKK. Ser315 is modified (phosphoserine). The FFAT signature appears at 321–327; it reads EFFDAVE. The region spanning 363–592 is the START domain; it reads GTHRFVQKVE…FTSYVQEKTA (230 aa). The an N-acylsphing-4-enine site is built by Glu446, Gln467, Asn504, and Tyr553.

Interacts with VAPA and VAPB. Interaction with VAPB is less efficient than with VAPA. Interacts (via FFAT motif) with the MOSPD2 (via MSP domain). Post-translationally, phosphorylation on Ser-132 decreases the affinity toward phosphatidylinositol 4-phosphate at Golgi membranes and reduces ceramide transfer activity. Inactivated by hyperphosphorylation of serine residues by CSNK1G2/CK1 that triggers dissociation from the Golgi complex, thus down-regulating ER-to-Golgi transport of ceramide and sphingomyelin synthesis.

The protein localises to the cytoplasm. The protein resides in the golgi apparatus. Its subcellular location is the endoplasmic reticulum. The enzyme catalyses N-hexadecanoylsphing-4-enine(in) = N-hexadecanoylsphing-4-enine(out). In terms of biological role, shelters ceramides and diacylglycerol lipids inside its START domain and mediates the intracellular trafficking of ceramides and diacylglycerol lipids in a non-vesicular manner. The sequence is that of Ceramide transfer protein (CERT1) from Cricetulus griseus (Chinese hamster).